A 954-amino-acid polypeptide reads, in one-letter code: MPWVEPKPRPGPEQKPKLTKPDSATGPQWYQESQESESEGKQPPPGPLAPPKSPEPSGPLASEQDAPLPEGDDAPPRPSMLDDAPRLPLELDDAPLPEEETPEPTAICRHRHRCHTDCLEGLLSRTFQWLGWQVGAHPWIFLLAPLMLTAALGTGFLYLPKDEEEDLEEHYTPVGSPAKAERRFVQGHFTTNDSYRFSASRRSTEANFVSLLVVSYSDSLLDPATFAEVSKLDGAVQDLRVAREKGSQIQYQQVCARYRALCVPPNPILYAWQVNKTLNLSSISFPAYNHGRHPLYLTGFFGGYILGGSLGMGQLLLRAKAMRLLYYLKTEDPEYDVQSKQWLTHLLDQFTNIKNILALKKIEVVHFTSLSRQLEFEATSVTVIPVFHLAYILIILFAVTSCFRFDCIRNKMCVAAFGVISAFLAVVSGFGLLLHIGVPFVIIVANSPFLILGVGVDDMFIMISAWHKTNLADDIRERMSNVYSKAAVSITITTITNILALYTGIMSSFRSVQCFCIYTGMTLLFCYFYNITCFGAFMALDGKREVVCLCWLKKADPKWPSFKKFCCFPFGSVPDEHGTDIHPISLFFRDYFGPFLTRSESKYFVVFIYVLYIISSIYGCFHVQEGLDLRNLASDDSYITPYFNVEENYFSDYGPRVMVIVTKKVDYWDKDVRQKLENCTKIFEKNVYVDKNLTEFWLDAYVQYLKGNSQDPNEKNTFMNNIPDFLSNFPNFQHDINISSSNEIISSRGFIQTTDVSSSAKKKILLFQLRRIAEDCQIPLMVYNQAFIYFDQYAAILEDTVRNVLVASAAMFIVSLLLIPYPLCSLWVTFAIGSVIVGVTGFMAFWKVNLDSISMINLVICIGFSFDFSVHISYAFVSSSQPSVNQKSVEALYLLGYPVLQSAISTIIGVCVLAAAKAYIFRTFFKIMFLVMIFGAAHGLIFIPVFLTFFGRFI.

A compositionally biased stretch (basic and acidic residues) spans 1–20 (MPWVEPKPRPGPEQKPKLTK). A disordered region spans residues 1-103 (MPWVEPKPRP…APLPEEETPE (103 aa)). Positions 42–57 (QPPPGPLAPPKSPEPS) are enriched in pro residues. A compositionally biased stretch (acidic residues) spans 90–102 (ELDDAPLPEEETP). Residues 139 to 159 (WIFLLAPLMLTAALGTGFLYL) traverse the membrane as a helical segment. N-linked (GlcNAc...) asparagine glycosylation is found at N192, N275, and N279. 7 helical membrane-spanning segments follow: residues 297–317 (LTGF…QLLL), 383–403 (VIPV…TSCF), 423–443 (FLAV…FVII), 447–467 (SPFL…SAWH), 486–506 (AAVS…TGIM), 520–540 (GMTL…FMAL), and 603–623 (YFVV…CFHV). One can recognise an SSD domain in the interval 383-540 (VIPVFHLAYI…ITCFGAFMAL (158 aa)). Residues N678, N692, and N737 are each glycosylated (N-linked (GlcNAc...) asparagine). 5 helical membrane-spanning segments follow: residues 804–824 (VLVA…YPLC), 826–846 (LWVT…MAFW), 858–878 (LVIC…AFVS), 894–914 (LLGY…CVLA), and 927–947 (IMFL…PVFL).

This sequence belongs to the patched family. As to expression, expressed in germ cells of the testis (at protein level). Detected in blood lymph, colon, small intestine, ovary, testis, prostate, thymus and spleen with highest levels in testis.

It is found in the cell projection. The protein resides in the cilium. It localises to the flagellum membrane. Its subcellular location is the endoplasmic reticulum membrane. Functionally, may play a role in sperm development or sperm function. However, does not appear to have an essential role in spermatogenesis or male fertility. This chain is Patched domain-containing protein 3 (PTCHD3), found in Homo sapiens (Human).